Here is a 447-residue protein sequence, read N- to C-terminus: MRFSLSPVRPHSVVVPSLPKQDVVSYISGTTSNRQCRCVLTLPSPSVSTSRPPVLPKPETWESLLLNHDQIPGEFSPTGSSIPVKLGRRWMEYQGLQNWDGLLDPLDDNLRREILRYGQFVESAYQAFDFDPSSPTYGTCRFPRSTLLERSGLPNSGYRLTKNLRATSGINLPRWIEKAPSWMATQSSWIGYVAVCQDKEEISRLGRRDVVISFRGTATCLEWLENLRATLTHLPNGPTGANLNGSNSGPMVESGFLSLYTSGVHSLRDMVREEIARLLQSYGDEPLSVTITGHSLGAAIATLAAYDIKTTFKRAPMVTVISFGGPRVGNRCFRKLLEKQGTKVLRIVNSDDVITKVPGVVLENREQDNVKMTASIMPSWIQRRVEETPWVYAEIGKELRLSSRDSPHLSSINVATCHELKTYLHLVDGFVSSTCPFRETARRVLHR.

The N-terminal 46 residues, 1–46, are a transit peptide targeting the chloroplast; sequence MRFSLSPVRPHSVVVPSLPKQDVVSYISGTTSNRQCRCVLTLPSPS. Residues 293 to 297 carry the GXSXG motif; sequence GHSLG. Ser-295 (acyl-ester intermediate) is an active-site residue. Active-site charge relay system residues include Asp-352 and His-418.

It belongs to the AB hydrolase superfamily. Lipase family. As to expression, expressed in flower buds, but not in leaves or roots. Restricted to the stamen filaments immediately before flower opening.

It localises to the plastid. It is found in the chloroplast. The catalysed reaction is a 1,2-diacyl-sn-glycero-3-phosphocholine + H2O = a 2-acyl-sn-glycero-3-phosphocholine + a fatty acid + H(+). The enzyme catalyses 1-hexadecanoyl-2-(9Z,12Z-octadecadienoyl)-sn-glycero-3-phosphocholine + H2O = 2-(9Z,12Z-octadecadienoyl)-sn-glycero-3-phosphocholine + hexadecanoate + H(+). Functionally, sn-1-specific phospholipase that releases free fatty acids from phospholipids. Low activity on galactolipids and triacylglycerols. Catalyzes the initial step of jasmonic acid biosynthesis. Not essential for jasmonate biosynthesis after wounding or upon pathogen infection. This is Phospholipase A(1) DAD1, chloroplastic from Arabidopsis thaliana (Mouse-ear cress).